The primary structure comprises 1190 residues: Ras-specific guanine nucleotide-releasing factor 2 (1190 aa).

A PH 1 domain is found at 22–133; the sequence is EGTKRGFLSK…WMEAIHQASY (112 aa). Positions 155–193 form a coiled coil; sequence ETEKIAANQLRHQLEDQDTEIERLKSEIVALNKTKERMR. An IQ domain is found at 205 to 234; sequence DIKKIKKVQSFMRGWLCRRKWKTIVQDYIC. The DH domain occupies 243 to 429; it reads KRNQIVFTMV…EELSRVMHDE (187 aa). One can recognise a PH 2 domain in the interval 470–588; the sequence is PSVERGKLSK…WMSDISQCVD (119 aa). The N-terminal Ras-GEF domain occupies 635 to 755; sequence KVPQIRYASV…LTSSLNSRIG (121 aa). The segment at 713 to 744 is disordered; the sequence is VDGKSPRLCRKFSSPPPLAVSRTSSPVRARKL. A phosphoserine mark is found at Ser725 and Ser726. Position 736 is a phosphoserine; by CDK5 (Ser736). The segment at 743 to 751 is regulates proteasomal degradation; it reads KLSLTSSLN. A phosphoserine mark is found at Ser745 and Ser749. The tract at residues 757–826 is disordered; it reads LDLTTSSSSS…QPGGQVADST (70 aa). Residues 760 to 776 are compositionally biased toward low complexity; that stretch reads TTSSSSSSPTTTVHSPA. Polar residues predominate over residues 798-810; that stretch reads TDMSPCRSPSTTP. 3 positions are modified to phosphoserine: Ser801, Ser805, and Ser925. Positions 955–1187 constitute a Ras-GEF domain; sequence SAMELAEQIT…YELSLKIEPR (233 aa). The interval 1052 to 1081 is responsible of the affinity for farnesylated versus geranylgeranylated Ras; it reads ALNRSAIYRLKKTWTKVSKQTKALMDKLQK.

Homooligomer and heterooligomer with RASGRF1. Interacts with Ras and RAC1. Interacts in a calcium-dependent manner with calmodulin. Interacts with CDK5R1 and probably EPB49. Interacts with the AMPA receptor through GRIA1. Interacts with microtubules. Phosphorylated by CDK5; down-regulates RASGRF2-mediated RAC1 activation. Post-translationally, ubiquitinated upon interaction with Ras. Ubiquitination leads to degradation through the 26S proteasome. In terms of tissue distribution, widely expressed. Detected in brain, lung, spleen, pancreas, kidney, liver, heart, mammary gland and skeletal muscle.

The protein localises to the cytoplasm. The protein resides in the cell membrane. Its subcellular location is the endoplasmic reticulum membrane. Its function is as follows. Functions as a calcium-regulated nucleotide exchange factor activating both Ras and RAC1 through the exchange of bound GDP for GTP. Preferentially activates HRAS in vivo compared to RRAS based on their different types of prenylation. Functions in synaptic plasticity by contributing to the induction of long term potentiation. This chain is Ras-specific guanine nucleotide-releasing factor 2 (Rasgrf2), found in Rattus norvegicus (Rat).